Reading from the N-terminus, the 1426-residue chain is MNDWHRIFTQNVLVPPHPQRARQPWKESTAFQCVLKWLDGPVIRQGVLEVLSEVECHLRVSFFDVTYRHFFGRTWKTTVKPTKRPPSRIVFNEPLYFHTSLNHPHIVAVVEVVAEGKKRDGSLQTLSCGFGILRIFSNQPDSPISASQDKRLRLYHGTPRALLHPLLQDPAEQNRHMTLIENCSLQYTLKPHPALEPAFHLLPENLLVSGLQQIPGLLPAHGESGDALRKPRLQKPITGHLDDLFFTLYPSLEKFEEELLELHVQDHFQEGCGPLDGGALEILERRLRVGVHNGLGFVQRPQVVVLVPEMDVALTRSASFSRKVVSSSKTSSGSQALVLRSRLRLPEMVGHPAFAVIFQLEYVFSSPAGVDGNAASVTSLSNLACMHMVRWAVWNPLLEADSGRVTLPLQGGIQPNPSHCLVYKVPSASMSSEEVKQVESGTLRFQFSLGSEEHLDAPTEPVSGPKVERRPSRKPPTSPSSPPAPVPRVLAAPQNSPVGPGLSISQLAASPRSPTQHCLARPTSQLPHGSQASPAQAQEFPLEAGISHLEADLSQTSLVLETSIAEQLQELPFTPLHAPIVVGTQTRSSAGQPSRASMVLLQSSGFPEILDANKQPAEAVSATEPVTFNPQKEESDCLQSNEMVLQFLAFSRVAQDCRGTSWPKTVYFTFQFYRFPPATTPRLQLVQLDEAGQPSSGALTHILVPVSRDGTFDAGSPGFQLRYMVGPGFLKPGERRCFARYLAVQTLQIDVWDGDSLLLIGSAAVQMKHLLRQGRPAVQASHELEVVATEYEQDNMVVSGDMLGFGRVKPIGVHSVVKGRLHLTLANVGHPCEQKVRGCSTLPPSRSRVISNDGASRFSGGSLLTTGSSRRKHVVQAQKLADVDSELAAMLLTHARQGKGPQDVSRESDATRRRKLERMRSVRLQEAGGDLGRRGTSVLAQQSVRTQHLRDLQVIAAYRERTKAESIASLLSLAITTEHTLHATLGVAEFFEFVLKNPHNTQHTVTVEIDNPELSVIVDSQEWRDFKGAAGLHTPVEEDMFHLRGSLAPQLYLRPHETAHVPFKFQSFSAGQLAMVQASPGLSNEKGMDAVSPWKSSAVPTKHAKVLFRASGGKPIAVLCLTVELQPHVVDQVFRFYHPELSFLKKAIRLPPWHTFPGAPVGMLGEDPPVHVRCSDPNVICETQNVGPGEPRDIFLKVASGPSPEIKDFFVIIYSDRWLATPTQTWQVYLHSLQRVDVSCVAGQLTRLSLVLRGTQTVRKVRAFTSHPQELKTDPKGVFVLPPRGVQDLHVGVRPLRAGSRFVHLNLVDVDCHQLVASWLVCLCCRQPLISKAFEIMLAAGEGKGVNKRITYTNPYPSRRTFHLHSDHPELLRFREDSFQVGGGETYTIGLQFAPSQRVGEEEILIYINDHEDKNEEAFCVKVIYQ.

S142 is modified (phosphoserine). Disordered regions lie at residues 450 to 536 and 896 to 935; these read GSEE…SPAQ and RQGKGPQDVSRESDATRRRKLERMRSVRLQEAGGDLGRRG. The span at 474-486 shows a compositional bias: pro residues; the sequence is KPPTSPSSPPAPV. The segment covering 503 to 536 has biased composition (polar residues); it reads SISQLAASPRSPTQHCLARPTSQLPHGSQASPAQ. Residues 823 to 1426 form a sufficient for basal bodies localization region; it reads LTLANVGHPC…EAFCVKVIYQ (604 aa).

The protein belongs to the NPHP4 family. As to quaternary structure, interacts with NPHP1. Interacts with NPHP1 and RPGRIP1L/NPHP8; NPHP1, NPHP4 and RPGRIP1L are proposed to form a functional NPHP1-4-8 module localized to cell-cell contacts and the ciliary transition zone; NPHP4 mediates the interaction between NPHP1 and RPGRIP1L. Interacts with IQCB1/NPHP5; the interaction likely requires additional interactors. Interacts with RPGRIP1, CEP164, JADE1, PALS1, INADL, PARD6A, INVS, DVL2, LATS1. Interacts with INTU; INTU mediates the interaction between NPHP4 and DAAM1. Interacts with SPATA7. As to expression, expressed in kidney, skeletal muscle, heart and liver, and to a lesser extent in brain and lung.

It localises to the cytoplasm. The protein resides in the cytoskeleton. The protein localises to the cilium basal body. Its subcellular location is the microtubule organizing center. It is found in the centrosome. It localises to the cell junction. The protein resides in the tight junction. The protein localises to the nucleus. Its function is as follows. Involved in the organization of apical junctions; the function is proposed to implicate a NPHP1-4-8 module. Does not seem to be strictly required for ciliogenesis. Required for building functional cilia. Involved in the organization of the subapical actin network in multiciliated epithelial cells. Seems to recruit INT to basal bodies of motile cilia which subsequently interacts with actin-modifying proteins such as DAAM1. In cooperation with INVS may down-regulate the canonical Wnt pathway and promote the Wnt-PCP pathway by regulating expression and subcellular location of disheveled proteins. Stabilizes protein levels of JADE1 and promotes its translocation to the nucleus leading to cooperative inhibition of canonical Wnt signaling. Acts as a negative regulator of the hippo pathway by association with LATS1 and modifying LATS1-dependent phosphorylation and localization of WWTR1/TAZ. The sequence is that of Nephrocystin-4 (NPHP4) from Homo sapiens (Human).